A 642-amino-acid chain; its full sequence is Forkhead box protein K2 (642 aa).

Positions 30–91 constitute an FHA domain; the sequence is VTIGRNSSQG…NGVFVDGVFQ (62 aa). A disordered region spans residues 201-221; that stretch reads QSENDKDASGGDSPKDDSKPP. Residues 203–219 are compositionally biased toward basic and acidic residues; sequence ENDKDASGGDSPKDDSK. The fork-head DNA-binding region spans 219–314; that stretch reads KPPYSYAQLI…EQAFRKRRPR (96 aa). The DNA-binding; major groove stretch occupies residues 261 to 279; it reads KGWQNSIRHNLSLNRYFIK. Residues Leu271, Ser272, Asn274, and Phe277 each coordinate Mg(2+). DNA-binding; minor groove regions lie at residues 289-293 and 309-314; these read KGSFW and RKRRPR. Disordered regions lie at residues 323 to 359 and 589 to 615; these read LGPL…REGS and ASAS…KTDE. 2 stretches are compositionally biased toward polar residues: residues 327–353 and 589–605; these read SSRS…TPES and ASAS…QSEQ. Positions 606–615 are enriched in basic and acidic residues; that stretch reads PDIKRGKTDE.

As to expression, in neurula embryos, expressed strongly in the future floor plate and weakly in the neural crest progenitor cells. As development progresses, expression becomes stronger in neural crest cells. At stage 24, expressed in the eye, brain, branchial arches and in the presomitic mesoderm in the posterior embryo. At stage 29, additionally expressed in the pronephric tubules. At stage 35, expressed in the migrating lateral muscle precursors of the abdomen. Additionally, the developing proctodeum and head structures including the branchial arches, eyes and otic vesicles continue to show expression. Expression also persists in the nephros.

The protein resides in the nucleus. Its subcellular location is the cytoplasm. Transcriptional regulator involved in different processes such as glucose metabolism, aerobic glycolysis and autophagy. Recognizes and binds the forkhead DNA sequence motif (5'-GTAAACA-3') and can both act as a transcription activator or repressor, depending on the context. Acts as a key regulator of metabolic reprogramming towards aerobic glycolysis, a process in which glucose is converted to lactate in the presence of oxygen. Acts as a negative regulator of autophagy in skeletal muscle: in response to starvation, enters the nucleus, binds the promoters of autophagy genes and represses their expression, preventing proteolysis of skeletal muscle proteins. This is Forkhead box protein K2 from Xenopus laevis (African clawed frog).